A 40-amino-acid polypeptide reads, in one-letter code: Photosystem II reaction center protein Y (40 aa).

Residues 5 to 23 (LVLVASPILLALGWAGFNI) form a helical membrane-spanning segment.

This sequence belongs to the PsbY family. PSII is composed of 1 copy each of membrane proteins PsbA, PsbB, PsbC, PsbD, PsbE, PsbF, PsbH, PsbI, PsbJ, PsbK, PsbL, PsbM, PsbT, PsbX, PsbY, PsbZ, Psb30/Ycf12, peripheral proteins PsbO, CyanoQ (PsbQ), PsbU, PsbV and a large number of cofactors. It forms dimeric complexes.

It is found in the cellular thylakoid membrane. Its function is as follows. Loosely associated component of the core of photosystem II (PSII), it is not always seen in crystals. PSII is a light-driven water plastoquinone oxidoreductase, using light energy to abstract electrons from H(2)O, generating a proton gradient subsequently used for ATP formation. The chain is Photosystem II reaction center protein Y from Synechococcus sp. (strain WH7803).